A 343-amino-acid chain; its full sequence is Transmembrane protein 120A (343 aa).

The Cytoplasmic portion of the chain corresponds to 1–132 (MHPPPPGPLG…KQAKFAYKDE (132 aa)). Position 130 (K130) interacts with CoA. Residues 133–152 (YEKFKLYLTIILILISFTCR) traverse the membrane as a helical segment. Topologically, residues 153-158 (FLLNSR) are extracellular. Residues 159 to 177 (VTDAAFNFLLVWYYCTLTI) form a helical membrane-spanning segment. The Cytoplasmic portion of the chain corresponds to 178–190 (RESILINNGSRIK). Residues S187 and R188 each coordinate CoA. Residues 191–209 (GWWVFHHYVSTFLSGVMLT) form a helical membrane-spanning segment. At 210-218 (WPDGLMYQK) the chain is on the extracellular side. The chain crosses the membrane as a helical span at residues 219-240 (FRNQFLSFSMYQSFVQFLQYYY). CoA contacts are provided by Q237, Y240, Q241, and H283. Topologically, residues 241-270 (QSGCLYRLRALGERHTMDLTVEGFQSWMWR) are cytoplasmic. The chain crosses the membrane as a helical span at residues 271–294 (GLTFLLPFLFFGHFWQLFNALTLF). Topologically, residues 295–304 (NLARDPECKE) are extracellular. The helical transmembrane segment at 305–330 (WQVLMCGFPFLLLFLGNFFTTLRVVH) threads the bilayer. Residues 331–343 (QKFHNQLHGSKKE) lie on the Cytoplasmic side of the membrane. K332 lines the CoA pocket.

It belongs to the TMEM120 family. As to quaternary structure, homodimer. Forms heterooligomer with TMEM120B. Interacts with PKD2; TMEM120A inhibits PKD2 channel activity through the physical association of PKD2 with TMEM120A.

The protein localises to the cell membrane. The protein resides in the nucleus inner membrane. It localises to the endoplasmic reticulum. Functionally, multifunctional protein involved in mechanosensation, and plays an essential role in lipid metabolism and adipocyte differentiation. May function as an ion channel involved in sensing mechanical stimuli. Mediates the mechanosensitivity of the PKD2-TMEM120A channel complex through direct physical interaction. TMEM120A seems to affect mechanosensation by inhibiting PIEZO2 channels, possibly by altering cellular lipid content. TMEM120A is structurally similar to a lipid-modifying enzyme, ELOVL7, and contains a bound coenzyme A molecule, which suggests it might function as an enzyme in lipid metabolism. Additionnaly, implicated in innate immune response against Zika virus. Acts as a key activator of the antiviral signaling involving STING1. The chain is Transmembrane protein 120A from Bos taurus (Bovine).